The chain runs to 21 residues: Putative sperm adenylate cyclase (21 aa).

The enzyme catalyses ATP = 3',5'-cyclic AMP + diphosphate. The polypeptide is Putative sperm adenylate cyclase (Mus musculus (Mouse)).